Here is a 1036-residue protein sequence, read N- to C-terminus: Non-canonical non-ribosomal peptide synthetase FUB8 (1036 aa).

Positions 21–343 are adenylation (A) domain; the sequence is EIARDEPDRV…LASVVTHPDE (323 aa). The region spanning 544–621 is the Carrier domain; that stretch reads TTEDVVRSGI…QLAHTVWSHL (78 aa). Serine 579 is subject to O-(pantetheine 4'-phosphoryl)serine. Residues 658–899 are thioester reductase (TR) domain; that stretch reads LTGTTGEIGS…IPIDLLTEVI (242 aa).

It participates in mycotoxin biosynthesis. Functionally, non-canonical non-ribosomal peptide synthetase; part of the gene cluster that mediates the biosynthesis of fusaric acid, a mycotoxin with low to moderate toxicity to animals and humans, but with high phytotoxic properties. L-aspartate is suggested as fusaric acid amino acid precursor that is activated and further processed to O-acetyl-L-homoserine by cluster enzymes aspartate kinase FUB3 and homoserine O-acetyltransferase FUB5, as well as enzymes of the primary metabolism. The polyketide synthase (PKS) FUB1 generates the triketide trans-2-hexenal which is presumptively released by the hydrolase FUB4 and linked to the NRPS-bound amino acid precursor by NAD(P)-dependent dehydrogenase FUB6. FUB1, FUB4, and the non-canonical NRPS Fub8 may form an enzyme complex. Further processing of the NRPS-bound intermediate might be carried out by FUB6 and the sulfhydrylase FUB7, enabling a spontaneous electrocyclization to close the carbon backbone of fusaric acid. Dihydrofusaric acid is likely to be released via reduction by the thioester reductase (TR) domain of FUB8 whereupon the final oxidation to fusaric acid may (also) be performed by the FMN-dependent dehydrogenase FUB9. This chain is Non-canonical non-ribosomal peptide synthetase FUB8, found in Fusarium oxysporum f. sp. lycopersici (strain 4287 / CBS 123668 / FGSC 9935 / NRRL 34936) (Fusarium vascular wilt of tomato).